The sequence spans 192 residues: Large ribosomal subunit protein uL3 (192 aa).

This sequence belongs to the universal ribosomal protein uL3 family. Part of the 50S ribosomal subunit. Forms a cluster with proteins L14 and L19.

Its function is as follows. One of the primary rRNA binding proteins, it binds directly near the 3'-end of the 23S rRNA, where it nucleates assembly of the 50S subunit. The polypeptide is Large ribosomal subunit protein uL3 (rplC) (Wolinella succinogenes (strain ATCC 29543 / DSM 1740 / CCUG 13145 / JCM 31913 / LMG 7466 / NCTC 11488 / FDC 602W) (Vibrio succinogenes)).